A 264-amino-acid polypeptide reads, in one-letter code: H-2 class II histocompatibility antigen, E-Q beta chain (264 aa).

Positions 1 to 26 (MVWLPRVPCVAAVILLLTVLSPPVAL) are cleaved as a signal peptide. The interval 27–121 (VRDSRPWFLE…IFDNFLVRRR (95 aa)) is beta-1. The Extracellular segment spans residues 27–225 (VRDSRPWFLE…KAQSTSAQNK (199 aa)). 2 disulfides stabilise this stretch: Cys-38–Cys-106 and Cys-144–Cys-200. N-linked (GlcNAc...) asparagine glycosylation is present at Asn-46. The beta-2 stretch occupies residues 122-225 (VEPTVTVYPT…KAQSTSAQNK (104 aa)). The Ig-like C1-type domain occupies 124-214 (PTVTVYPTKT…PSLTDPVTVE (91 aa)). Residues 226–246 (MLSGVGGFVLGLLFLGAGLFI) traverse the membrane as a helical segment. The Cytoplasmic portion of the chain corresponds to 247–264 (YFRNQKGQSGLQPTGLLS).

Belongs to the MHC class II family.

It localises to the membrane. The polypeptide is H-2 class II histocompatibility antigen, E-Q beta chain (Mus musculus (Mouse)).